Reading from the N-terminus, the 424-residue chain is Protein SamB (424 aa).

One can recognise a UmuC domain in the interval 2-189 (FALADVNSFY…QPVEEIWGVG (188 aa)).

This sequence belongs to the DNA polymerase type-Y family.

Involved in UV protection and mutation. The polypeptide is Protein SamB (samB) (Salmonella typhimurium).